The primary structure comprises 514 residues: Thymus-specific serine protease (514 aa).

A signal peptide spans 1–24 (MAVWLAQWLGPLLLVSLWGLLAPA). N-linked (GlcNAc...) asparagine glycosylation is found at N70 and N172. The active-site Charge relay system is the S185. A glycan (N-linked (GlcNAc...) asparagine) is linked at N321. Active-site charge relay system residues include D447 and H472.

The protein belongs to the peptidase S28 family. As to expression, expressed predominantly in cortical thymic epithelial cells.

The protein localises to the cytoplasmic vesicle. In terms of biological role, protease that may play a role in T-cell development. The protein is Thymus-specific serine protease (PRSS16) of Homo sapiens (Human).